Reading from the N-terminus, the 184-residue chain is Ribosome-recycling factor (184 aa).

The protein belongs to the RRF family.

The protein resides in the cytoplasm. Functionally, responsible for the release of ribosomes from messenger RNA at the termination of protein biosynthesis. May increase the efficiency of translation by recycling ribosomes from one round of translation to another. In Desulfotalea psychrophila (strain LSv54 / DSM 12343), this protein is Ribosome-recycling factor.